Here is an 85-residue protein sequence, read N- to C-terminus: Mitochondrial protein pet191 homolog (85 aa).

A CHCH domain is found at 18–61; the sequence is HSDCMFVKKKSARECLKNKDELPEECKNLIEAYGECKRQMLDMT. Residues 21-32 carry the Cx10C motif motif; it reads CMFVKKKSAREC. 2 cysteine pairs are disulfide-bonded: Cys-21-Cys-53 and Cys-32-Cys-43. Residues 43-53 carry the Cx9C motif motif; sequence CKNLIEAYGEC. A disordered region spans residues 65–85; it reads RIAPEKNTDQDTEKPSNVDEQ.

The protein belongs to the PET191 family.

It localises to the mitochondrion. Functionally, involved in the assembly of cytochrome c oxidase. The polypeptide is Mitochondrial protein pet191 homolog (Schizosaccharomyces pombe (strain 972 / ATCC 24843) (Fission yeast)).